We begin with the raw amino-acid sequence, 497 residues long: Protein DETOXIFICATION 25 (497 aa).

Helical transmembrane passes span 43–63 (LPST…QAFI), 70–90 (GLAA…GIMA), 121–141 (IVDT…GPIL), 157–177 (IYPW…MQMY), 186–206 (IIGI…WWCV), 216–236 (ALLG…VYVF), 261–281 (LSIS…IIVL), 291–311 (IAIS…NICF), 339–359 (VVLV…LAFG), 381–401 (IVLS…GVAI), 416–436 (SYYA…NFGI), and 438–458 (GLWS…CYVI).

Belongs to the multi antimicrobial extrusion (MATE) (TC 2.A.66.1) family.

It is found in the membrane. The sequence is that of Protein DETOXIFICATION 25 from Arabidopsis thaliana (Mouse-ear cress).